The following is a 420-amino-acid chain: Imidazolonepropionase (420 aa).

The Fe(3+) site is built by H77 and H79. Zn(2+) is bound by residues H77 and H79. Positions 86, 149, and 182 each coordinate 4-imidazolone-5-propanoate. Y149 provides a ligand contact to N-formimidoyl-L-glutamate. Position 245 (H245) interacts with Fe(3+). H245 serves as a coordination point for Zn(2+). E248 is a binding site for 4-imidazolone-5-propanoate. D319 lines the Fe(3+) pocket. D319 is a Zn(2+) binding site. N-formimidoyl-L-glutamate is bound at residue N321.

The protein belongs to the metallo-dependent hydrolases superfamily. HutI family. Zn(2+) serves as cofactor. Requires Fe(3+) as cofactor.

Its subcellular location is the cytoplasm. The enzyme catalyses 4-imidazolone-5-propanoate + H2O = N-formimidoyl-L-glutamate. It functions in the pathway amino-acid degradation; L-histidine degradation into L-glutamate; N-formimidoyl-L-glutamate from L-histidine: step 3/3. Catalyzes the hydrolytic cleavage of the carbon-nitrogen bond in imidazolone-5-propanoate to yield N-formimidoyl-L-glutamate. It is the third step in the universal histidine degradation pathway. This chain is Imidazolonepropionase, found in Haloarcula marismortui (strain ATCC 43049 / DSM 3752 / JCM 8966 / VKM B-1809) (Halobacterium marismortui).